The following is a 37-amino-acid chain: Large ribosomal subunit protein bL36c (37 aa).

This sequence belongs to the bacterial ribosomal protein bL36 family.

The protein resides in the plastid. The protein is Large ribosomal subunit protein bL36c of Aneura mirabilis (Parasitic liverwort).